We begin with the raw amino-acid sequence, 209 residues long: Uracil phosphoribosyltransferase (209 aa).

Residues R79, R104, and 131–139 (DPMLATGGS) contribute to the 5-phospho-alpha-D-ribose 1-diphosphate site. Residues I194 and 199 to 201 (GDA) contribute to the uracil site. D200 contacts 5-phospho-alpha-D-ribose 1-diphosphate.

The protein belongs to the UPRTase family. The cofactor is Mg(2+).

It carries out the reaction UMP + diphosphate = 5-phospho-alpha-D-ribose 1-diphosphate + uracil. It functions in the pathway pyrimidine metabolism; UMP biosynthesis via salvage pathway; UMP from uracil: step 1/1. Its activity is regulated as follows. Allosterically activated by GTP. Functionally, catalyzes the conversion of uracil and 5-phospho-alpha-D-ribose 1-diphosphate (PRPP) to UMP and diphosphate. The sequence is that of Uracil phosphoribosyltransferase from Symbiobacterium thermophilum (strain DSM 24528 / JCM 14929 / IAM 14863 / T).